The sequence spans 582 residues: La-related protein 7 (582 aa).

Methionine 1 carries the post-translational modification N-acetylmethionine. Residues 1-27 (METESGNQEKVMEEESTEKKKEVEKKK) form a disordered region. Over residues 10 to 25 (KVMEEESTEKKKEVEK) the composition is skewed to basic and acidic residues. In terms of domain architecture, HTH La-type RNA-binding spans 28-122 (RSRVKQVLAD…KPLGERPKDE (95 aa)). In terms of domain architecture, RRM spans 125–203 (RTVYVELLPK…PRKPGIFPKT (79 aa)). Disordered regions lie at residues 188 to 368 (NPPE…ERHK) and 410 to 442 (KSES…RTQE). A compositionally biased stretch (basic residues) spans 219–228 (KKKKKKKGRM). Over residues 229–240 (KKEDNIQAKEEN) the composition is skewed to basic and acidic residues. Lysine 237 is covalently cross-linked (Glycyl lysine isopeptide (Lys-Gly) (interchain with G-Cter in SUMO2)). Threonine 257 is subject to Phosphothreonine. 6 positions are modified to phosphoserine: serine 258, serine 261, serine 273, serine 298, serine 299, and serine 300. Residues 316–335 (IQKDIIKEASEASKENRDIE) show a composition bias toward basic and acidic residues. The residue at position 337 (serine 337) is a Phosphoserine. Position 338 is a phosphothreonine (threonine 338). Serine 351 bears the Phosphoserine mark. The span at 354 to 367 (KTKRKHKKKHKERH) shows a compositional bias: basic residues. Lysine 410 is covalently cross-linked (Glycyl lysine isopeptide (Lys-Gly) (interchain with G-Cter in SUMO2)). Residues 428–442 (KNEKTANREECRTQE) are compositionally biased toward basic and acidic residues. One can recognise a xRRM domain in the interval 450-563 (QFVSGVIVKI…TEKLITKAEK (114 aa)).

The protein belongs to the LARP7 family. As to quaternary structure, core component of the 7SK RNP complex, at least composed of 7SK RNA, LARP7, MEPCE, HEXIM1 (or HEXIM2) and P-TEFb (composed of CDK9 and CCNT1/cyclin-T1). Interacts with METTL16. Interacts with RBM7; upon genotoxic stress this interaction is enhanced, triggering the release of inactive P-TEFb complex from the core, yielding to P-TEFb complex activation. Associates with box C/D small nucleolar ribonucleoprotein (snoRNP) complexes.

The protein localises to the nucleus. The protein resides in the nucleoplasm. RNA-binding protein that specifically binds distinct small nuclear RNA (snRNAs) and regulates their processing and function. Specifically binds the 7SK snRNA (7SK RNA) and acts as a core component of the 7SK ribonucleoprotein (RNP) complex, thereby acting as a negative regulator of transcription elongation by RNA polymerase II. The 7SK RNP complex sequesters the positive transcription elongation factor b (P-TEFb) in a large inactive 7SK RNP complex preventing RNA polymerase II phosphorylation and subsequent transcriptional elongation. The 7SK RNP complex also promotes snRNA gene transcription by RNA polymerase II via interaction with the little elongation complex (LEC). LARP7 specifically binds to the highly conserved 3'-terminal U-rich stretch of 7SK RNA; on stimulation, remains associated with 7SK RNA, whereas P-TEFb is released from the complex. LARP7 also acts as a regulator of mRNA splicing fidelity by promoting U6 snRNA processing. Specifically binds U6 snRNAs and associates with a subset of box C/D RNP complexes: promotes U6 snRNA 2'-O-methylation by facilitating U6 snRNA loading into box C/D RNP complexes. U6 snRNA 2'-O-methylation is required for mRNA splicing fidelity. Binds U6 snRNAs with a 5'-CAGGG-3' sequence motif. U6 snRNA processing is required for spermatogenesis. The chain is La-related protein 7 from Homo sapiens (Human).